Consider the following 631-residue polypeptide: 30-kDa cleavage and polyadenylation specificity factor 30 (631 aa).

The disordered stretch occupies residues 12 to 38; sequence EGGLDSGPVQNTASVPVAPPENSSSAA. 3 C3H1-type zinc fingers span residues 60-87, 88-112, and 114-141; these read SFRQTVCRHWLRGLCMKGDACGFLHQFD, KARMPICRFFRLYGECREQDCVYKH, and NEDIKECNMYKLGFCPNGPDCRYRHAKL. A disordered region spans residues 179 to 234; sequence QDRPQGQVPMQGQPQESGNLQQQQQQQPQQSQHQVSQTLIPNPADQTNRTSHPLPQ. Residues 182–215 show a composition bias toward low complexity; it reads PQGQVPMQGQPQESGNLQQQQQQQPQQSQHQVSQ. The segment covering 216 to 231 has biased composition (polar residues); the sequence is TLIPNPADQTNRTSHP. A YTH domain is found at 237–372; sequence NRYFVVKSNN…SVGEQLASLL (136 aa). The segment covering 392–407 has biased composition (basic and acidic residues); sequence EEEKAKGVNPESRAEN. Disordered regions lie at residues 392–447 and 541–631; these read EEEK…RGIM and PHMG…KKRR. A compositionally biased stretch (acidic residues) spans 412–432; the sequence is PFEDNEEEEEEEDESEEEEES. Over residues 573–583 the composition is skewed to basic and acidic residues; sequence KTPERSDERGV. Residues serine 610 and serine 612 each carry the phosphoserine modification. Residues 621-631 are compositionally biased toward basic residues; sequence RSRHGEGKKRR.

Belongs to the CPSF4/YTH1 family. As to quaternary structure, component of the cleavage and polyadenylation specificity factor (CPSF) complex. Can form homodimers. Binds to calmodulin. Forms a complex with cleavage and polyadenylation specificity factor (CPSF) subunits CPSF73-I, CPSF73-II, CPSF100, CPSF160, CFIS2, FIPS3, FIPS5, PAPS2, PAPS3, CLPS3, PCFS1, PCFS4, CSTF50 and CSTF77. As to expression, expressed in seedlings, roots, leaves, siliques, stems and flowers.

The protein resides in the nucleus. It localises to the cytoplasm. With respect to regulation, endonuclease activity is repressed by the N-terminal domain of FIPS5. Nuclease activity is inhibited by zinc (&gt;100 uM), cadmium in a progressive manner (50 percent activity at 1 mM Cd(2+)), and high salt levels (e.g. KCl or NaCl &gt;600 mM). Stimulated by ATP in the presence of Zn(2+), even at inhibitory zinc concentrations. Elevated temperatures prevent RNA-binding at 55 degrees Celsius, but endonuclease activity at 70 degrees Celsius. The sulfhydryl reagent dithiothreitol (DTT) inhibits both RNA-binding and nuclease activities. In terms of biological role, component of the cleavage and polyadenylation specificity factor (CPSF) complex that play a key role in pre-mRNA 3'-end formation. May interact with poly(A) polymerase and other factors to bring about cleavage and poly(A) addition. Mediates poly(A) site selection. Binds RNA in a calcium-dependent manner. Exhibits endonuclease activity with an ability to nick and degrade linear as well as circular single-stranded RNA that leaves RNA 3' ends with hydroxyl groups, thus mediating processing of the pre-mRNA as a prelude to the polyadenylation. Involved in the post-transcriptional control, probably via poly(A) addition, of the responses of plants to stress, especially genes mediating tolerance to oxidative stress. Plays a role in the regulation of salicylic acid (SA) production via the control of messenger RNA 3' end processing, thus being a key component of programmed cell death and plant immune responses required for resistance to virulent Pseudomonas syringae pv tomato DC3000 (Pst). This chain is 30-kDa cleavage and polyadenylation specificity factor 30, found in Arabidopsis thaliana (Mouse-ear cress).